The chain runs to 366 residues: Small ribosomal subunit biogenesis GTPase RsgA (366 aa).

The region spanning Arg107 to Val266 is the CP-type G domain. Residues Thr154 to Asp157 and Gly208 to Thr216 contribute to the GTP site. Zn(2+)-binding residues include Cys289, Cys294, His296, and Cys302.

The protein belongs to the TRAFAC class YlqF/YawG GTPase family. RsgA subfamily. Monomer. Associates with 30S ribosomal subunit, binds 16S rRNA. Zn(2+) serves as cofactor.

Its subcellular location is the cytoplasm. One of several proteins that assist in the late maturation steps of the functional core of the 30S ribosomal subunit. Helps release RbfA from mature subunits. May play a role in the assembly of ribosomal proteins into the subunit. Circularly permuted GTPase that catalyzes slow GTP hydrolysis, GTPase activity is stimulated by the 30S ribosomal subunit. In Streptomyces coelicolor (strain ATCC BAA-471 / A3(2) / M145), this protein is Small ribosomal subunit biogenesis GTPase RsgA.